The sequence spans 186 residues: Elongation factor P (186 aa).

The protein belongs to the elongation factor P family.

Its subcellular location is the cytoplasm. Its pathway is protein biosynthesis; polypeptide chain elongation. In terms of biological role, involved in peptide bond synthesis. Stimulates efficient translation and peptide-bond synthesis on native or reconstituted 70S ribosomes in vitro. Probably functions indirectly by altering the affinity of the ribosome for aminoacyl-tRNA, thus increasing their reactivity as acceptors for peptidyl transferase. This Maridesulfovibrio salexigens (strain ATCC 14822 / DSM 2638 / NCIMB 8403 / VKM B-1763) (Desulfovibrio salexigens) protein is Elongation factor P.